The primary structure comprises 365 residues: Bifunctional chorismate mutase/prephenate dehydratase (365 aa).

The 96-residue stretch at 1–96 (MSEADQLKAL…SCLALEQPLR (96 aa)) folds into the Chorismate mutase domain. Arg-11, Arg-28, Lys-39, and Glu-57 together coordinate substrate. Positions 97–272 (VAYLGPEGTF…NSTRFLIIGS (176 aa)) constitute a Prephenate dehydratase domain. The ACT domain occupies 284–361 (SIIVSMRNKP…VALKVLGSYP (78 aa)).

It localises to the cytoplasm. The enzyme catalyses chorismate = prephenate. It catalyses the reaction prephenate + H(+) = 3-phenylpyruvate + CO2 + H2O. It functions in the pathway amino-acid biosynthesis; L-phenylalanine biosynthesis; phenylpyruvate from prephenate: step 1/1. The protein operates within metabolic intermediate biosynthesis; prephenate biosynthesis; prephenate from chorismate: step 1/1. Functionally, catalyzes the Claisen rearrangement of chorismate to prephenate and the decarboxylation/dehydration of prephenate to phenylpyruvate. The polypeptide is Bifunctional chorismate mutase/prephenate dehydratase (Stutzerimonas stutzeri (Pseudomonas stutzeri)).